The primary structure comprises 197 residues: Dephospho-CoA kinase (197 aa).

Residues L4 to K197 enclose the DPCK domain. ATP is bound at residue A12 to T17.

Belongs to the CoaE family.

It localises to the cytoplasm. It carries out the reaction 3'-dephospho-CoA + ATP = ADP + CoA + H(+). Its pathway is cofactor biosynthesis; coenzyme A biosynthesis; CoA from (R)-pantothenate: step 5/5. Catalyzes the phosphorylation of the 3'-hydroxyl group of dephosphocoenzyme A to form coenzyme A. The chain is Dephospho-CoA kinase from Lactiplantibacillus plantarum (strain ATCC BAA-793 / NCIMB 8826 / WCFS1) (Lactobacillus plantarum).